We begin with the raw amino-acid sequence, 664 residues long: Transketolase 1 (664 aa).

His-26 contributes to the substrate binding site. Thiamine diphosphate is bound by residues His-66 and 114–116 (GPL). Residue Asp-155 coordinates Mg(2+). Positions 156 and 185 each coordinate thiamine diphosphate. Asn-185 and Ile-187 together coordinate Mg(2+). Residues His-260, Arg-357, and Ser-384 each contribute to the substrate site. A thiamine diphosphate-binding site is contributed by His-260. Catalysis depends on Glu-411, which acts as the Proton donor. Residue Phe-437 participates in thiamine diphosphate binding. 3 residues coordinate substrate: His-461, Asp-469, and Arg-520.

Belongs to the transketolase family. Homodimer. The cofactor is Mg(2+). Ca(2+) is required as a cofactor. Mn(2+) serves as cofactor. Requires Co(2+) as cofactor. It depends on thiamine diphosphate as a cofactor.

The catalysed reaction is D-sedoheptulose 7-phosphate + D-glyceraldehyde 3-phosphate = aldehydo-D-ribose 5-phosphate + D-xylulose 5-phosphate. Catalyzes the transfer of a two-carbon ketol group from a ketose donor to an aldose acceptor, via a covalent intermediate with the cofactor thiamine pyrophosphate. The sequence is that of Transketolase 1 (tkt1) from Vibrio vulnificus (strain CMCP6).